Here is a 557-residue protein sequence, read N- to C-terminus: Leucine-rich glioma-inactivated protein 1 (557 aa).

The first 34 residues, 1–34, serve as a signal peptide directing secretion; that stretch reads MESESSRRMGNACIPLKRIAYFLCLFSVVLLTEG. The region spanning 35–72 is the LRRNT domain; it reads KKPAKPKCPAVCTCSKDNALCENARSIPRTVPPDVISL. LRR repeat units follow at residues 92-113, 116-137, and 140-161; these read SLQL…AFIG, HLEY…TFRG, and SLIH…IFKG. The LRRCT domain maps to 173–223; it reads NAFNCDCKLKWLVEWLGHTNATVEDIYCEGPPEYKKRKINSLSPKDFDCII. A glycan (N-linked (GlcNAc...) asparagine) is linked at Asn-192. EAR repeat units lie at residues 225-267, 271-313, 317-364, 366-415, 419-462, 464-506, and 510-552; these read EFAK…EWDH, TFRN…KRDG, KFIK…KWNG, GFYS…QWSK, LFTN…KWGG, SFQD…NWDA, and KFVK…KHVI. Asn-277 carries an N-linked (GlcNAc...) asparagine glycan. Asn-422 carries an N-linked (GlcNAc...) asparagine glycan.

In terms of assembly, oligomer. Interacts with KCNA1 within a complex containing KCNA1, KCNA4 and KCNAB1. Part of a complex containing ADAM22, DLG4/PSD95 and CACNG2 (stargazin). Can bind to ADAM11 and ADAM23. In terms of processing, glycosylated. In terms of tissue distribution, expressed in the brain (at protein level). Expressed in cerebellar cortex basket cell terminals (at protein level). Highly expressed in the dentate gyrus and CA3 field of the hippocampus.

Its subcellular location is the secreted. It localises to the synapse. It is found in the cytoplasm. The protein resides in the golgi apparatus. The protein localises to the endoplasmic reticulum. In terms of biological role, regulates voltage-gated potassium channels assembled from KCNA1, KCNA4 and KCNAB1. It slows down channel inactivation by precluding channel closure mediated by the KCNAB1 subunit. Ligand for ADAM22 that positively regulates synaptic transmission mediated by AMPA-type glutamate receptors. Plays a role in suppressing the production of MMP1/3 through the phosphatidylinositol 3-kinase/ERK pathway. This chain is Leucine-rich glioma-inactivated protein 1, found in Mus musculus (Mouse).